The sequence spans 354 residues: Guanine nucleotide-binding protein G(o) subunit alpha (354 aa).

Gly2 carries N-myristoyl glycine lipidation. Residue Cys3 is the site of S-palmitoyl cysteine attachment. The region spanning 32 to 354 (KDIKLLLLGA…ANNLRGCGLY (323 aa)) is the G-alpha domain. The tract at residues 35 to 48 (KLLLLGAGESGKST) is G1 motif. Residues 40–47 (GAGESGKS), 176–182 (LRTRVKT), 201–205 (DVGGQ), 270–273 (NKKD), and Ala326 each bind GTP. 2 residues coordinate Mg(2+): Ser47 and Thr182. The tract at residues 174–182 (DILRTRVKT) is G2 motif. Residues 197–206 (FKLFDVGGQR) form a G3 motif region. The interval 266 to 273 (ILFLNKKD) is G4 motif. The interval 324–329 (TCATDT) is G5 motif.

It belongs to the G-alpha family. G(i/o/t/z) subfamily. G proteins are composed of 3 units; alpha, beta and gamma. The alpha chain contains the guanine nucleotide binding site.

In terms of biological role, guanine nucleotide-binding proteins (G proteins) are involved as modulators or transducers in various transmembrane signaling systems. The G(o) protein function is not clear. The chain is Guanine nucleotide-binding protein G(o) subunit alpha from Lymnaea stagnalis (Great pond snail).